The following is a 278-amino-acid chain: Multidrug-efflux transporter 1 regulator (278 aa).

In terms of domain architecture, HTH merR-type spans 5-75 (YYSIGEVSKL…LEEMKKAQDL (71 aa)). Residues 8–27 (IGEVSKLANVSIKALRYYDK) constitute a DNA-binding region (H-T-H motif).

In terms of assembly, binds DNA as a homodimer.

Its function is as follows. Activates transcription of the bmr gene in response to structurally dissimilar drugs. Binds rhodamine as an inducer. The sequence is that of Multidrug-efflux transporter 1 regulator (bmrR) from Bacillus subtilis (strain 168).